Here is a 775-residue protein sequence, read N- to C-terminus: Subtilisin-like protease SBT1.2 (775 aa).

Residues 1-20 (MEPKPFFLCIIFLLFCSSSS) form the signal peptide. One can recognise an Inhibitor I9 domain in the interval 27–111 (TYIVQLHPNS…AVRPDHVLQV (85 aa)). Residues 116-618 (SYKFLGLDGF…AGHVNPQKAI (503 aa)) enclose the Peptidase S8 domain. Catalysis depends on charge relay system residues aspartate 146 and histidine 222. One can recognise a PA domain in the interval 388–470 (GGDKGSEFCL…YTESVLLKAY (83 aa)). Residues asparagine 472 and asparagine 544 are each glycosylated (N-linked (GlcNAc...) asparagine). The active-site Charge relay system is serine 552. The N-linked (GlcNAc...) asparagine glycan is linked to asparagine 652.

Belongs to the peptidase S8 family. In terms of tissue distribution, mostly expressed in leaves and cotyledons (especially in epidermal cells), and, to a lower extent, in floral buds, stems, and siliques. Strongly expressed in stomatal precursor cells (meristemoids and guard mother cells).

The protein resides in the secreted. It is found in the extracellular space. It localises to the apoplast. Its subcellular location is the cell membrane. Functionally, serine protease involved in the negative regulation of stomatal density and distribution. Not active on EPFL6 (AC Q1PEY6). Positive regulator of water use efficiency (WUE). The protein is Subtilisin-like protease SBT1.2 of Arabidopsis thaliana (Mouse-ear cress).